A 214-amino-acid polypeptide reads, in one-letter code: Probable adenylyl-sulfate kinase (214 aa).

Residue 13-20 (GLSGAGKT) coordinates ATP. Ser87 serves as the catalytic Phosphoserine intermediate. Residues 174–199 (WNRTNTFPLKSRPNPPHRHKSKSSRA) form a disordered region.

Belongs to the APS kinase family.

It carries out the reaction adenosine 5'-phosphosulfate + ATP = 3'-phosphoadenylyl sulfate + ADP + H(+). It participates in sulfur metabolism; hydrogen sulfide biosynthesis; sulfite from sulfate: step 2/3. Catalyzes the synthesis of activated sulfate. The protein is Probable adenylyl-sulfate kinase of Pseudomonas aeruginosa.